Here is a 1733-residue protein sequence, read N- to C-terminus: Gag-Pol polyprotein (1733 aa).

The N-myristoyl glycine; by host moiety is linked to residue glycine 2. The short motif at 109-112 (PSAP) is the PTAP/PSAP motif element. Pro residues predominate over residues 112 to 121 (PSLLPEPPLS). Disordered stretches follow at residues 112–196 (PSLL…ASRL) and 202–221 (LPVA…GGNG). Positions 128-132 (LYPAL) match the LYPX(n)L motif motif. The segment covering 159-170 (DPPPYRDPGPPP) has biased composition (pro residues). The PPXY motif motif lies at 160-163 (PPPY). Serine 190 bears the Phosphoserine; by host mark. The interval 343 to 391 (GRSPTNLAKVKGITQGPNESPSAFLERLKEAYRRYTPYDPEDPGQETNV) is interaction with host PIAS4. Residues 428-433 (IFNKRE) form an interaction with host UBE2I region. Basic and acidic residues-rich tracts occupy residues 432–464 (RETP…EKER) and 484–496 (KQDR…RRPQ). Disordered regions lie at residues 432-496 (RETP…RRPQ) and 511-550 (WAKD…EPRI). The stretch at 436–476 (EEREERIKRETEEKEERRRAEDEQKEKERDRRRHREMSKLL) forms a coiled coil. A CCHC-type zinc finger spans residues 500 to 517 (DQCAYCKEKGHWAKDCPK). The Peptidase A2 domain maps to 559–629 (VTFLVDTGAQ…CPYPLLGRDL (71 aa)). Catalysis depends on aspartate 564, which acts as the Protease; shared with dimeric partner. The region spanning 739-930 (LDQGILVPCQ…KQVKYLGYLL (192 aa)) is the Reverse transcriptase domain. Residues aspartate 807, aspartate 881, aspartate 882, aspartate 1181, glutamate 1219, aspartate 1240, and aspartate 1310 each coordinate Mg(2+). The region spanning 1172–1318 (PDADHTWYTD…ADQAAREVAT (147 aa)) is the RNase H type-1 domain. Residues 1385 to 1425 (HQLTHLSFSKTKALLERSPSPYYMLNRDRTLKNITETCKAC) form an HHCC-type zinc finger. The region spanning 1442 to 1600 (RGHRPGTHWE…TPYEILYGAP (159 aa)) is the Integrase catalytic domain. The Mg(2+) site is built by aspartate 1453 and aspartate 1512.

Homohexamer; further associates as homomultimer. The virus core is composed of a lattice formed from hexagonal rings, each containing six capsid monomers. Interacts with mouse UBE2I and mouse PIAS4. In terms of assembly, interacts (via PPXY motif) with host NEDD4. Interacts (via PSAP motif) with host TSG101. Interacts (via LYPX(n)L motif) with host PDCD6IP. As to quaternary structure, the reverse transcriptase is a monomer (Potential). Interacts (via RNase domains) with host release factor ETF1; this interaction is essential for translational readthrough of amber codon between viral gag and pol genes, as well as for viral replication. Homodimer. Mg(2+) serves as cofactor. In terms of processing, ubiquitinated by ITCH. Gag can recruit the ubiquitin ligase Itch in an L domain-independent manner to facilitate virus release via a mechanism that involves Gag ubiquitination. Post-translationally, specific enzymatic cleavages by the viral protease yield mature proteins. The protease is released by autocatalytic cleavage. The polyprotein is cleaved during and after budding, this process is termed maturation. Sumoylated; which is required for virus replication. In terms of processing, phosphorylated on serine residues.

It localises to the virion. The protein resides in the host cell membrane. It is found in the host late endosome membrane. Its subcellular location is the host endosome. The protein localises to the host multivesicular body. It localises to the host cytoplasm. The catalysed reaction is DNA(n) + a 2'-deoxyribonucleoside 5'-triphosphate = DNA(n+1) + diphosphate. The enzyme catalyses Endonucleolytic cleavage to 5'-phosphomonoester.. With respect to regulation, most efficiently inhibited by Amprenavir, which is able to block Gag-Pol processing in infected cells. Plays a role in budding and is processed by the viral protease during virion maturation outside the cell. During budding, it recruits, in a PPXY-dependent or independent manner, Nedd4-like ubiquitin ligases that conjugate ubiquitin molecules to Gag-Pol, or to Gag-Pol binding host factors. Interaction with HECT ubiquitin ligases probably links the viral protein to the host ESCRT pathway and facilitates release. Its function is as follows. Targets Gag and gag-pol polyproteins to the plasma membrane via a multipartite membrane binding signal, that includes its myristoylated N-terminus. Also mediates nuclear localization of the pre-integration complex. In terms of biological role, constituent of the pre-integration complex (PIC) which tethers the latter to mitotic chromosomes. This allows the integration of the viral genome into the host DNA. Functionally, forms the spherical core of the virion that encapsulates the genomic RNA-nucleocapsid complex. Involved in the packaging and encapsidation of two copies of the genome. Binds with high affinity to conserved UCUG elements within the packaging signal, located near the 5'-end of the genome. This binding is dependent on genome dimerization. Acts as a nucleic acid chaperone which is involved in rearrangement of nucleic acid secondary structures during gRNA retrotranscription. Its function is as follows. The aspartyl protease mediates proteolytic cleavages of Gag and Gag-Pol polyproteins during or shortly after the release of the virion from the plasma membrane. Cleavages take place as an ordered, step-wise cascade to yield mature proteins. This process is called maturation. Displays maximal activity during the budding process just prior to particle release from the cell (Potential). Cleaves the translation initiation factor eIF4G leading to the inhibition of host cap-dependent translation. In terms of biological role, RT is a multifunctional enzyme that converts the viral dimeric RNA genome into dsDNA in the cytoplasm, shortly after virus entry into the cell. This enzyme displays a DNA polymerase activity that can copy either DNA or RNA templates, and a ribonuclease H (RNase H) activity that cleaves the RNA strand of RNA-DNA heteroduplexes in a partially processive 3' to 5' endonucleasic mode. Conversion of viral genomic RNA into dsDNA requires many steps. A tRNA binds to the primer-binding site (PBS) situated at the 5' end of the viral RNA. RT uses the 3' end of the tRNA primer to perform a short round of RNA-dependent minus-strand DNA synthesis. The reading proceeds through the U5 region and ends after the repeated (R) region which is present at both ends of viral RNA. The portion of the RNA-DNA heteroduplex is digested by the RNase H, resulting in a ssDNA product attached to the tRNA primer. This ssDNA/tRNA hybridizes with the identical R region situated at the 3' end of viral RNA. This template exchange, known as minus-strand DNA strong stop transfer, can be either intra- or intermolecular. RT uses the 3' end of this newly synthesized short ssDNA to perform the RNA-dependent minus-strand DNA synthesis of the whole template. RNase H digests the RNA template except for a polypurine tract (PPT) situated at the 5' end of the genome. It is not clear if both polymerase and RNase H activities are simultaneous. RNase H probably can proceed both in a polymerase-dependent (RNA cut into small fragments by the same RT performing DNA synthesis) and a polymerase-independent mode (cleavage of remaining RNA fragments by free RTs). Secondly, RT performs DNA-directed plus-strand DNA synthesis using the PPT that has not been removed by RNase H as primers. PPT and tRNA primers are then removed by RNase H. The 3' and 5' ssDNA PBS regions hybridize to form a circular dsDNA intermediate. Strand displacement synthesis by RT to the PBS and PPT ends produces a blunt ended, linear dsDNA copy of the viral genome that includes long terminal repeats (LTRs) at both ends. Functionally, catalyzes viral DNA integration into the host chromosome, by performing a series of DNA cutting and joining reactions. This enzyme activity takes place after virion entry into a cell and reverse transcription of the RNA genome in dsDNA. The first step in the integration process is 3' processing. This step requires a complex comprising the viral genome, matrix protein and integrase. This complex is called the pre-integration complex (PIC). The integrase protein removes 2 nucleotides from each 3' end of the viral DNA, leaving recessed CA OH's at the 3' ends. In the second step that requires cell division, the PIC enters cell nucleus. In the third step, termed strand transfer, the integrase protein joins the previously processed 3' ends to the 5' ends of strands of target cellular DNA at the site of integration. The last step is viral DNA integration into host chromosome. This Cas-Br-E murine leukemia virus protein is Gag-Pol polyprotein (gag-pol).